Here is a 301-residue protein sequence, read N- to C-terminus: Ribosomal protein L11 methyltransferase (301 aa).

The S-adenosyl-L-methionine site is built by threonine 146, glycine 167, aspartate 189, and asparagine 234.

The protein belongs to the methyltransferase superfamily. PrmA family.

The protein localises to the cytoplasm. It carries out the reaction L-lysyl-[protein] + 3 S-adenosyl-L-methionine = N(6),N(6),N(6)-trimethyl-L-lysyl-[protein] + 3 S-adenosyl-L-homocysteine + 3 H(+). Methylates ribosomal protein L11. In Acinetobacter baumannii (strain AB307-0294), this protein is Ribosomal protein L11 methyltransferase.